Reading from the N-terminus, the 469-residue chain is MNPNQKIITIGSVSLTIATICFLMQIAILVTTVTLHFKQYECDSPANNQVMPCEPIIIERNITEIVYLTNTTIEKEICPKLVEYRNWSKPQCKITGFAPFSKDNSIRLSAGGDIWVTREPYVSCDPGKCYQFALGQGTTLDNKHSNDTIHDRTPHRTLLMNELGVPFHLGTRQVCIAWSSSSCHDGKAWLHVCVTGYDKNATASFIYDGRLVDSIGSWSQNILRTQESECVCINGTCTVVMTDGSASGRADTKILFIEEGKIVHTSPLSGSAQHVEECSCYPRYPGVRCICRDNWKGSNRPVVDINVKDYSIDSSYVCSGLVGDTPRKNDRSSSSYCRNPNNEKGTHGVKGWAFDDGNDVWMGRTISEDSRSGYETFKVIGGWSTPNSKLQINRQVIVDSNDRSGYSGIFSVEGKSCINRCFYVELIRGREQETRVWWTSNSIVVFCGTSGTYGTGSWPDGADINLMPI.

Residues 1-9 are Intravirion-facing; sequence MNPNQKIIT. A helical membrane pass occupies residues 10 to 30; sequence IGSVSLTIATICFLMQIAILV. The involved in apical transport and lipid raft association stretch occupies residues 11–33; it reads GSVSLTIATICFLMQIAILVTTV. Residues 31–469 are Virion surface-facing; the sequence is TTVTLHFKQY…DGADINLMPI (439 aa). The interval 36–88 is hypervariable stalk region; it reads HFKQYECDSPANNQVMPCEPIIIERNITEIVYLTNTTIEKEICPKLVEYRNWS. 3 N-linked (GlcNAc...) asparagine; by host glycosylation sites follow: Asn61, Asn70, and Asn86. The tract at residues 91-469 is head of neuraminidase; the sequence is QCKITGFAPF…DGADINLMPI (379 aa). 8 disulfide bridges follow: Cys92–Cys417, Cys124–Cys129, Cys183–Cys230, Cys232–Cys237, Cys278–Cys291, Cys280–Cys289, Cys318–Cys337, and Cys421–Cys447. Arg118 contributes to the substrate binding site. N-linked (GlcNAc...) asparagine; by host glycosylation is present at Asn146. Asp151 functions as the Proton donor/acceptor in the catalytic mechanism. Residue Arg152 coordinates substrate. Residues Asn200 and Asn234 are each glycosylated (N-linked (GlcNAc...) asparagine; by host). 276-277 contributes to the substrate binding site; the sequence is EE. Arg292 serves as a coordination point for substrate. Ca(2+)-binding residues include Asp293, Gly297, and Asp324. Arg371 provides a ligand contact to substrate. Tyr406 functions as the Nucleophile in the catalytic mechanism.

This sequence belongs to the glycosyl hydrolase 34 family. As to quaternary structure, homotetramer. Requires Ca(2+) as cofactor. N-glycosylated.

It localises to the virion membrane. It is found in the host apical cell membrane. The enzyme catalyses Hydrolysis of alpha-(2-&gt;3)-, alpha-(2-&gt;6)-, alpha-(2-&gt;8)- glycosidic linkages of terminal sialic acid residues in oligosaccharides, glycoproteins, glycolipids, colominic acid and synthetic substrates.. Its activity is regulated as follows. Inhibited by the neuraminidase inhibitors zanamivir (Relenza) and oseltamivir (Tamiflu). These drugs interfere with the release of progeny virus from infected cells and are effective against all influenza strains. Resistance to neuraminidase inhibitors is quite rare. Functionally, catalyzes the removal of terminal sialic acid residues from viral and cellular glycoconjugates. Cleaves off the terminal sialic acids on the glycosylated HA during virus budding to facilitate virus release. Additionally helps virus spread through the circulation by further removing sialic acids from the cell surface. These cleavages prevent self-aggregation and ensure the efficient spread of the progeny virus from cell to cell. Otherwise, infection would be limited to one round of replication. Described as a receptor-destroying enzyme because it cleaves a terminal sialic acid from the cellular receptors. May facilitate viral invasion of the upper airways by cleaving the sialic acid moieties on the mucin of the airway epithelial cells. Likely to plays a role in the budding process through its association with lipid rafts during intracellular transport. May additionally display a raft-association independent effect on budding. Plays a role in the determination of host range restriction on replication and virulence. Sialidase activity in late endosome/lysosome traffic seems to enhance virus replication. This Aves (whales) protein is Neuraminidase.